We begin with the raw amino-acid sequence, 215 residues long: Pyrrolidone-carboxylate peptidase (215 aa).

Catalysis depends on residues Glu80, Cys143, and His167.

Belongs to the peptidase C15 family. As to quaternary structure, homotetramer.

It localises to the cytoplasm. The catalysed reaction is Release of an N-terminal pyroglutamyl group from a polypeptide, the second amino acid generally not being Pro.. Its function is as follows. Removes 5-oxoproline from various penultimate amino acid residues except L-proline. The sequence is that of Pyrrolidone-carboxylate peptidase from Bacillus cereus (strain B4264).